We begin with the raw amino-acid sequence, 570 residues long: Sulfite reductase [NADPH] hemoprotein beta-component (570 aa).

Cysteine 434, cysteine 440, cysteine 479, and cysteine 483 together coordinate [4Fe-4S] cluster. Cysteine 483 contributes to the siroheme binding site.

The protein belongs to the nitrite and sulfite reductase 4Fe-4S domain family. In terms of assembly, alpha(8)-beta(8). The alpha component is a flavoprotein, the beta component is a hemoprotein. It depends on siroheme as a cofactor. [4Fe-4S] cluster is required as a cofactor.

The catalysed reaction is hydrogen sulfide + 3 NADP(+) + 3 H2O = sulfite + 3 NADPH + 4 H(+). It functions in the pathway sulfur metabolism; hydrogen sulfide biosynthesis; hydrogen sulfide from sulfite (NADPH route): step 1/1. Functionally, component of the sulfite reductase complex that catalyzes the 6-electron reduction of sulfite to sulfide. This is one of several activities required for the biosynthesis of L-cysteine from sulfate. This Salmonella newport (strain SL254) protein is Sulfite reductase [NADPH] hemoprotein beta-component.